A 242-amino-acid polypeptide reads, in one-letter code: ATP synthase subunit a (242 aa).

Transmembrane regions (helical) follow at residues 29–49 (SSIY…LAFY), 84–104 (FIPL…LGMT), 114–134 (IIVT…VGFI), 140–160 (FLTL…MIVI), 181–201 (MAGH…MIYL), and 203–223 (FLPI…AILQ).

Belongs to the ATPase A chain family. As to quaternary structure, F-type ATPases have 2 components, CF(1) - the catalytic core - and CF(0) - the membrane proton channel. CF(1) has five subunits: alpha(3), beta(3), gamma(1), delta(1), epsilon(1). CF(0) has three main subunits: a(1), b(2) and c(9-12). The alpha and beta chains form an alternating ring which encloses part of the gamma chain. CF(1) is attached to CF(0) by a central stalk formed by the gamma and epsilon chains, while a peripheral stalk is formed by the delta and b chains.

The protein localises to the cell inner membrane. Key component of the proton channel; it plays a direct role in the translocation of protons across the membrane. In Rickettsia typhi (strain ATCC VR-144 / Wilmington), this protein is ATP synthase subunit a.